Here is a 641-residue protein sequence, read N- to C-terminus: Tetracycline resistance protein TetQ (641 aa).

The tr-type G domain maps to 1-244 (MNIINLGILA…AITSFILPPA (244 aa)). GTP contacts are provided by residues 10-17 (AHIDAGKT), 74-78 (DTPGH), and 128-131 (NKID).

Belongs to the TRAFAC class translation factor GTPase superfamily. Classic translation factor GTPase family. TetM/TetO subfamily.

Abolishes the inhibitory effect of tetracyclin on protein synthesis by a non-covalent modification of the ribosomes. In Xylanibacter ruminicola (Prevotella ruminicola), this protein is Tetracycline resistance protein TetQ (tetQ).